A 153-amino-acid chain; its full sequence is uncharacterized protein (153 aa).

A2 carries the N-acetylalanine modification.

This is an uncharacterized protein from Arabidopsis thaliana (Mouse-ear cress).